We begin with the raw amino-acid sequence, 718 residues long: Tegument protein UL46 (718 aa).

Disordered regions lie at residues 433–510 (SAGP…EPPA) and 581–611 (TADD…DDES). Residues 444–454 (GPGGHRAGGGT) show a composition bias toward gly residues. The span at 455–467 (CREKIQRARRDNE) shows a compositional bias: basic and acidic residues.

This sequence belongs to the herpesviridae HHV-1 VP11/12 protein family. As to quaternary structure, interacts with VP16. Interacts with host LCK, PIK3R1, SHC1 AND GRB2; these interactions promote the activation of the PI3K/AKT pathway. Interacts with host YWHAB. Interacts with ICP0; this interaction targets UL46 for degradation by the proteasome. Interacts (via N-terminus) with host TMEM173. Interacts (via C-terminus) with host TBK1. Interacts with host DOK2. In terms of processing, phosphorylated by host LCK. The phosphorylation seems to be lymphocyte-specific.

The protein resides in the virion tegument. It is found in the host cytoplasm. It localises to the host cell membrane. Its function is as follows. Plays a role in the activation of the host PI3K/AKT pathway to promote cell survival. Interacts with and activates host LCK and thereby recruits downstream partners SHC1, GRB2 and PI3KR1 in order to activate the PI3K pathway by phosphorylating host AKT on its activating residues. This mechanism is inhibited by the viral protein US3 that instead promotes incorporation of UL46 into virions. Plays a role in the inhibition of TMEM173/STING-mediated type I interferon production. Interacts with host DOK2 and induces its degradation. This immune evasion mechanism to inactivate T-cells may play an important role during pathogenesis. The chain is Tegument protein UL46 from Homo sapiens (Human).